The primary structure comprises 352 residues: Ketoisovalerate oxidoreductase subunit VorB (352 aa).

Heterotrimer of the VorA, VorB and VorC subunits.

It carries out the reaction 3-methyl-2-oxobutanoate + 2 oxidized [2Fe-2S]-[ferredoxin] + CoA = 2-methylpropanoyl-CoA + 2 reduced [2Fe-2S]-[ferredoxin] + CO2 + H(+). The sequence is that of Ketoisovalerate oxidoreductase subunit VorB (vorB) from Methanothermobacter marburgensis (strain ATCC BAA-927 / DSM 2133 / JCM 14651 / NBRC 100331 / OCM 82 / Marburg) (Methanobacterium thermoautotrophicum).